The following is a 941-amino-acid chain: Protein BREAST CANCER SUSCEPTIBILITY 1 homolog (941 aa).

The RING-type zinc-finger motif lies at 16-54 (CPICLSLYNSAVSLSCNHVFCNACIVKSMKMDATCPVCK). Disordered regions lie at residues 87–282 (FVSQ…ILPS) and 303–528 (KVKV…GKDD). 2 stretches are compositionally biased toward basic and acidic residues: residues 96-115 (SDKE…DKNR) and 125-136 (KRNEYGKTKEID). Residues 157–173 (LLQNLSAESLTKPTESV) show a composition bias toward polar residues. The segment covering 175-196 (TAEKPKDYTENTVIRLDEHPSL) has biased composition (basic and acidic residues). Residues 216 to 236 (NSSQRTESDQLLGTTPVNVPS) show a composition bias toward polar residues. Residues 242-255 (DSDHESPSKEDEQQ) are compositionally biased toward basic and acidic residues. The Nuclear localization signal 1 motif lies at 298 to 305 (QKKLPKVK). Composition is skewed to polar residues over residues 329–357 (GVSQ…SGTI) and 376–391 (SKAQ…NVSN). 2 stretches are compositionally biased toward basic and acidic residues: residues 428–453 (GKGD…EKPS) and 477–487 (KTSEKKLKLDS). The Nuclear localization signal 2 signature appears at 444–451 (EKRSPTEK). The segment covering 489 to 498 (MISSKATQPH) has biased composition (polar residues). Residues 512 to 528 (DKQDSRNNRKSTVGKDD) are compositionally biased toward basic and acidic residues. The C2HC pre-PHD-type zinc finger occupies 561–612 (KFTCAFCQCSEDTEASGEMTHYYRGEPVSADFNGGSKVIHVHKNCAEWAPNV). Residues 632-681 (ISCSCCGLKGAALGCYNKSCKNSFHVTCAKLIPECRWDNVKFVMLCPLDA) form a PHD-type; degenerate zinc finger. 2 BRCT domains span residues 724–819 (KQFH…PYEI) and 840–941 (KKPK…LVLI).

In terms of assembly, forms heterodimer with BARD1/ROW1. As to expression, expressed ubiquitously with highest levels in flower buds. Mostly expressed in flowers and siliques, and, to a lower extent, in roots, rosette leaves, inflorescence and young cauline leaves.

The protein localises to the nucleus. Its function is as follows. Plays a role in DNA repair and in cell-cycle control. Required for the repair of DNA double-strand breaks (DSBs), both natural and induced by genotoxic stress, by homologous recombination (HR). The protein is Protein BREAST CANCER SUSCEPTIBILITY 1 homolog of Arabidopsis thaliana (Mouse-ear cress).